Here is a 330-residue protein sequence, read N- to C-terminus: 4-hydroxythreonine-4-phosphate dehydrogenase (330 aa).

Substrate contacts are provided by His-134 and Thr-135. Residues His-163, His-208, and His-263 each coordinate a divalent metal cation. Residues Lys-271, Asn-280, and Arg-289 each coordinate substrate.

It belongs to the PdxA family. As to quaternary structure, homodimer. The cofactor is Zn(2+). Mg(2+) is required as a cofactor. Co(2+) serves as cofactor.

It is found in the cytoplasm. It carries out the reaction 4-(phosphooxy)-L-threonine + NAD(+) = 3-amino-2-oxopropyl phosphate + CO2 + NADH. The protein operates within cofactor biosynthesis; pyridoxine 5'-phosphate biosynthesis; pyridoxine 5'-phosphate from D-erythrose 4-phosphate: step 4/5. In terms of biological role, catalyzes the NAD(P)-dependent oxidation of 4-(phosphooxy)-L-threonine (HTP) into 2-amino-3-oxo-4-(phosphooxy)butyric acid which spontaneously decarboxylates to form 3-amino-2-oxopropyl phosphate (AHAP). This chain is 4-hydroxythreonine-4-phosphate dehydrogenase, found in Methylococcus capsulatus (strain ATCC 33009 / NCIMB 11132 / Bath).